Consider the following 802-residue polypeptide: Putative flavin carrier protein 3 (802 aa).

The signal sequence occupies residues 1-28; sequence MRFLQVYKSSALIGLIILLASKVNLAEA. At 29–169 the chain is on the lumenal side; sequence KRKLVATSLV…YFSNGKTVSQ (141 aa). N-linked (GlcNAc...) asparagine glycosylation occurs at Asn149. Residues 170–190 form a helical membrane-spanning segment; it reads IGVKWATAVVAGIGLLLSAIL. The Cytoplasmic segment spans residues 191 to 200; that stretch reads STFGNSTAAS. Residues 201–221 traverse the membrane as a helical segment; sequence HISANTMSLFLYFQSVVVVAM. Residues 222–229 lie on the Lumenal side of the membrane; that stretch reads QHVHRVPP. The chain crosses the membrane as a helical span at residues 230 to 250; the sequence is IAAAWAENLVWSMGLIRISFM. Topologically, residues 251–255 are cytoplasmic; sequence QRIFR. Residues 256-278 traverse the membrane as a helical segment; it reads WYVQSTGGTPSLYLTSTSMSVLA. Topologically, residues 279–323 are lumenal; it reads QRSWQYLMELPLIKRATNVLYGNANTLIFRGIKRLGYKMGIENTS. The N-linked (GlcNAc...) asparagine glycan is linked to Asn321. A helical membrane pass occupies residues 324–344; the sequence is IVCTGFTFFVLCGYVLAGFII. The Cytoplasmic segment spans residues 345–377; it reads VFKCCVELATRLGWIQKARFWEFRKQWRMILKG. The helical transmembrane segment at 378 to 398 threads the bilayer; sequence ALLRYIYIGFVQLTILSFWEF. Topologically, residues 399 to 405 are lumenal; the sequence is TERDSPA. The helical transmembrane segment at 406-426 threads the bilayer; that stretch reads VIVIACLFILLSCGLMLWAAW. At 427–467 the chain is on the cytoplasmic side; it reads RTVFFARRSVALYNNPAALLYGDEYVLHKYGFFYTMFNANH. Residues 468–488 form a helical membrane-spanning segment; it reads YWWNIVLLSYIFVKSLLVGFA. At 489-495 the chain is on the lumenal side; sequence QASGQTQ. A helical membrane pass occupies residues 496 to 516; that stretch reads VLFMFILDLFYFVAIIYYKPY. Residues 517–525 lie on the Cytoplasmic side of the membrane; it reads LDRPTNIMN. The helical transmembrane segment at 526–546 threads the bilayer; sequence ILIATVTVVNSFLFMFFSDLF. N-linked (GlcNAc...) asparagine glycosylation is present at Asn547. Residues 547-557 are Lumenal-facing; it reads NQSYKVAAIMG. Residues 558–578 form a helical membrane-spanning segment; that stretch reads WIFFIMNAAFSFILLMMILAF. The Cytoplasmic segment spans residues 579 to 802; the sequence is AGMMLFSKNP…PPGFFDEGFM (224 aa). A phosphoserine mark is found at Ser616 and Ser635. The interval 629-802 is disordered; sequence KDHDDNSDYE…PPGFFDEGFM (174 aa). Polar residues-rich tracts occupy residues 653-663, 697-717, and 761-788; these read DETTPTTVTSS, KQQTFPHNLTNLSRENLSTLG, and DTSSSDGGFRSQNYVRDDSINSLGNNKQ. Phosphoserine occurs at positions 779 and 782.

It belongs to the transient receptor potential (TRP) ion channel family.

It localises to the endoplasmic reticulum membrane. May be responsible for the transport of FAD into the endoplasmic reticulum lumen, where it is required for oxidative protein folding. The protein is Putative flavin carrier protein 3 (FLC3) of Saccharomyces cerevisiae (strain ATCC 204508 / S288c) (Baker's yeast).